We begin with the raw amino-acid sequence, 292 residues long: Ribosomal protein L11 methyltransferase (292 aa).

4 residues coordinate S-adenosyl-L-methionine: Thr-136, Gly-159, Asp-181, and Asn-228.

This sequence belongs to the methyltransferase superfamily. PrmA family.

The protein resides in the cytoplasm. The enzyme catalyses L-lysyl-[protein] + 3 S-adenosyl-L-methionine = N(6),N(6),N(6)-trimethyl-L-lysyl-[protein] + 3 S-adenosyl-L-homocysteine + 3 H(+). Functionally, methylates ribosomal protein L11. The protein is Ribosomal protein L11 methyltransferase of Rhizobium leguminosarum bv. trifolii (strain WSM2304).